The chain runs to 316 residues: MANLKEIRDRIVSVKNTRKITEAMRLVAAAKVRRAQDQVLKSRPFADKLARVLENIQSRVQFEAVDSPLLSKREVKSISLVCITADRGLCGGYNTNIIKKVEIRYAELVKQGYQPNLILVGKKAIGYFQNRKDRYAIKSTFKELEQVPTVKDSEGVTNEILAEFLSENSDRVEIIYTKFITLVSCAPVVQTLLPLDPQGIAEENDEIFRLTTKDSKLLVEKSNIEKSDSEKLPSDIVFEQSPDQLLDSLLPLYLQNQVLRALQESAASELACRMTAMNNASDNAKELASTLNLTYNKARQAAITQEILEVVGGSAV.

It belongs to the ATPase gamma chain family. F-type ATPases have 2 components, CF(1) - the catalytic core - and CF(0) - the membrane proton channel. CF(1) has five subunits: alpha(3), beta(3), gamma(1), delta(1), epsilon(1). CF(0) has three main subunits: a, b and c.

It localises to the cellular thylakoid membrane. Its function is as follows. Produces ATP from ADP in the presence of a proton gradient across the membrane. The gamma chain is believed to be important in regulating ATPase activity and the flow of protons through the CF(0) complex. The chain is ATP synthase gamma chain from Prochlorococcus marinus (strain AS9601).